Consider the following 368-residue polypeptide: Phosphoribosylformylglycinamidine cyclo-ligase (368 aa).

It belongs to the AIR synthase family.

It localises to the cytoplasm. It carries out the reaction 2-formamido-N(1)-(5-O-phospho-beta-D-ribosyl)acetamidine + ATP = 5-amino-1-(5-phospho-beta-D-ribosyl)imidazole + ADP + phosphate + H(+). It functions in the pathway purine metabolism; IMP biosynthesis via de novo pathway; 5-amino-1-(5-phospho-D-ribosyl)imidazole from N(2)-formyl-N(1)-(5-phospho-D-ribosyl)glycinamide: step 2/2. This chain is Phosphoribosylformylglycinamidine cyclo-ligase, found in Novosphingobium aromaticivorans (strain ATCC 700278 / DSM 12444 / CCUG 56034 / CIP 105152 / NBRC 16084 / F199).